The following is a 432-amino-acid chain: MGKNVVILGTQWGDEGKGKIVDLLTEEVAAVARFQGGHNAGHTLVIDGQKTVLHLIPSGILRSNVACLIGNGVVLAPDALLSEIKTLEDKGVPVRQRLFLSPACPLILPYHKALDLAREERLGSAKIGTTGRGIGPAYEDKVARRGVRLGDLAKPERFAEKLKEIMQYQNFVLEHYYKVAPIDYQKTLDETLKMAEELLPMMADVTDMLHEFRKRDENVLFEGAQGSLLDIDLGTYPYVTSSNTTAGGTATGSGFGPMYLDYVLGITKAYATRVGSGPFPTELFDDVGAYLAKKGNEFGATTGRPRRCGWFDAVALRHAIQINSVSGICLTKLDVLDGLDVVKVCVGYRTADGAEITRPPIDCEAFGEVEPVYEELPGWKESTFGVKRVEDLPKNAQDYIAFLEKQIEAPIDVISTGPDRNETITLRHPFSA.

GTP-binding positions include 13-19 (GDEGKGK) and 41-43 (GHT). The Proton acceptor role is filled by Asp14. Asp14 and Gly41 together coordinate Mg(2+). Residues 14-17 (DEGK), 39-42 (NAGH), Thr130, Arg144, Gln225, Thr240, and Arg304 each bind IMP. The Proton donor role is filled by His42. A substrate-binding site is contributed by 300–306 (ATTGRPR). GTP contacts are provided by residues Arg306, 332-334 (KLD), and 415-417 (STG).

It belongs to the adenylosuccinate synthetase family. In terms of assembly, homodimer. Mg(2+) serves as cofactor.

The protein localises to the cytoplasm. The catalysed reaction is IMP + L-aspartate + GTP = N(6)-(1,2-dicarboxyethyl)-AMP + GDP + phosphate + 2 H(+). The protein operates within purine metabolism; AMP biosynthesis via de novo pathway; AMP from IMP: step 1/2. In terms of biological role, plays an important role in the de novo pathway of purine nucleotide biosynthesis. Catalyzes the first committed step in the biosynthesis of AMP from IMP. This Hahella chejuensis (strain KCTC 2396) protein is Adenylosuccinate synthetase.